The following is a 258-amino-acid chain: Agamous-like MADS-box protein AGL3 (258 aa).

The region spanning 3–57 (RGKVELKRIENKINRQVTFAKRRNGLLKKAYELSVLCDAEIALLIFSNRGKLYEF) is the MADS-box domain. The K-box domain maps to 88–178 (LQDKYQDYLK…RRKLEDSDAA (91 aa)). Residues 186 to 214 (SSAAEQQQQHQQQQQGMSSYQSNPPIQEA) are disordered. Residues 191–200 (QQQQHQQQQQ) are compositionally biased toward low complexity. Over residues 201 to 210 (GMSSYQSNPP) the composition is skewed to polar residues.

As to quaternary structure, forms homodimers. Interacts with TT16/AGL32. In terms of tissue distribution, expressed in aerial vegetative organs and flowers, but not in roots. Expressed in flower primordia.

Its subcellular location is the nucleus. Functionally, probable transcription factor that binds specifically to the CArG box DNA sequence 5'-CC (A/T)6 GG-3'. Plays an important role in the determination of flower meristem identity. Involved in the specification of sepal identity. Contributes to the development of petals, stamens and carpels. In Arabidopsis thaliana (Mouse-ear cress), this protein is Agamous-like MADS-box protein AGL3 (AGL3).